The primary structure comprises 548 residues: MDMGGLDNLIANTAYLQARKTDSDSRELQRRRRSLALPGPQGCAELRQSLSPHFHSLCEQQPIGRRLFRDFLATVPKYSQAVAFLEDVQNWELAEEGPAKTSTLQQLAATCARDPGPQSFLSQDLATKCRAASTDEERKTLVEQAKAETMSFLQEQPFQDFLASPFYDRFLQWKLFEMQPVSDKYFTEFRVLGKGGFGEVCAVQVRNTGKMYACKKLDKKRLKKKGGEKMALLEKEILEKVNSPFIVSLAYAFESKTHLCLVMSLMNGGDLKFHIYNVGTRGLAMSRVIFYTAQMTCGVLHLHGLGIVYRDLKPENVLLDDLGNCRLSDLGLAVEVQDDKPITQRAGTNGYMAPEILMDKASYSYPVDWFAMGCSIYEMVAGRTPFKDFKEKVSKEDLKERTMKDEVAFHHENFTEETKDICRLFLAKKPEQRLGSREKADDPRKHPFFQTVNFPRLEAGLVEPPFVPDPSVVYAKDVDEIDDFSEVRGVEFDDKDKQFFQRFSTGAVPVAWQEEIIETGLFEELNDPNRPSGDGKGDSSKSGVCLLL.

S34 is subject to Phosphoserine; by PKA. Residues 54-171 (FHSLCEQQPI…LASPFYDRFL (118 aa)) form the RGS domain. Positions 186–449 (FTEFRVLGKG…ADDPRKHPFF (264 aa)) constitute a Protein kinase domain. ATP contacts are provided by residues 192–200 (LGKGGFGEV) and K215. D311 (proton acceptor) is an active-site residue. One can recognise an AGC-kinase C-terminal domain in the interval 450-515 (QTVNFPRLEA…GAVPVAWQEE (66 aa)). The segment at 523 to 548 (EELNDPNRPSGDGKGDSSKSGVCLLL) is disordered. C545 carries the post-translational modification Cysteine methyl ester. C545 carries S-geranylgeranyl cysteine lipidation. Positions 546 to 548 (LLL) are cleaved as a propeptide — removed in mature form.

It belongs to the protein kinase superfamily. AGC Ser/Thr protein kinase family. GPRK subfamily. As to quaternary structure, interacts (when prenylated) with PDE6D; this promotes release from membranes. In terms of processing, autophosphorylated. Phosphorylation at Ser-34 is regulated by light and activated by cAMP. As to expression, retina. Cones and rod.

It localises to the membrane. The catalysed reaction is L-threonyl-[rhodopsin] + ATP = O-phospho-L-threonyl-[rhodopsin] + ADP + H(+). It carries out the reaction L-seryl-[rhodopsin] + ATP = O-phospho-L-seryl-[rhodopsin] + ADP + H(+). Its activity is regulated as follows. Inhibited by phosphorylation of Ser-34. Functionally, retina-specific kinase involved in the shutoff of the photoresponse and adaptation to changing light conditions via cone opsin phosphorylation, including rhodopsin (RHO). This Ictidomys tridecemlineatus (Thirteen-lined ground squirrel) protein is Rhodopsin kinase GRK7 (GRK7).